The chain runs to 120 residues: uncharacterized protein (120 aa).

It localises to the mitochondrion. This is an uncharacterized protein from Arabidopsis thaliana (Mouse-ear cress).